Consider the following 432-residue polypeptide: tRNA modification GTPase MnmE (432 aa).

(6S)-5-formyl-5,6,7,8-tetrahydrofolate-binding residues include Arg-23, Glu-85, and Lys-124. A TrmE-type G domain is found at 217–362 (GARLALIGAP…LKEAVREALL (146 aa)). Asn-227 contacts K(+). Residues 227 to 232 (NAGKSS), 246 to 252 (SPIPGTT), and 271 to 274 (DTAG) each bind GTP. Residue Ser-231 coordinates Mg(2+). Residues Ser-246, Ile-248, and Thr-251 each coordinate K(+). Thr-252 contacts Mg(2+). Residue Lys-432 coordinates (6S)-5-formyl-5,6,7,8-tetrahydrofolate.

This sequence belongs to the TRAFAC class TrmE-Era-EngA-EngB-Septin-like GTPase superfamily. TrmE GTPase family. In terms of assembly, homodimer. Heterotetramer of two MnmE and two MnmG subunits. The cofactor is K(+).

It localises to the cytoplasm. In terms of biological role, exhibits a very high intrinsic GTPase hydrolysis rate. Involved in the addition of a carboxymethylaminomethyl (cmnm) group at the wobble position (U34) of certain tRNAs, forming tRNA-cmnm(5)s(2)U34. The polypeptide is tRNA modification GTPase MnmE (Thermus thermophilus (strain ATCC 27634 / DSM 579 / HB8)).